Here is a 166-residue protein sequence, read N- to C-terminus: Large ribosomal subunit protein uL10 (166 aa).

It belongs to the universal ribosomal protein uL10 family. Part of the ribosomal stalk of the 50S ribosomal subunit. The N-terminus interacts with L11 and the large rRNA to form the base of the stalk. The C-terminus forms an elongated spine to which L12 dimers bind in a sequential fashion forming a multimeric L10(L12)X complex.

Functionally, forms part of the ribosomal stalk, playing a central role in the interaction of the ribosome with GTP-bound translation factors. The polypeptide is Large ribosomal subunit protein uL10 (Bacillus velezensis (strain DSM 23117 / BGSC 10A6 / LMG 26770 / FZB42) (Bacillus amyloliquefaciens subsp. plantarum)).